Consider the following 184-residue polypeptide: MQQLAKDILASLETKMTQAQEVMLKNFCDIRTGTANPNILDKITVNYYGAPTFLKTLASISVSEGNQLNIKPYDSTLIPNIKKVLLASNLGITPQTDGLVVRLVFPKPTEERRKALMKEVEQLAEKTKVAIRNVRREGNDKIKKVELTKDLETFYLNQIQTLTDKNIKLIEKHTTTKNTELLKA.

It belongs to the RRF family.

It is found in the cytoplasm. Functionally, responsible for the release of ribosomes from messenger RNA at the termination of protein biosynthesis. May increase the efficiency of translation by recycling ribosomes from one round of translation to another. This Onion yellows phytoplasma (strain OY-M) protein is Ribosome-recycling factor.